We begin with the raw amino-acid sequence, 356 residues long: Probable butyrate kinase (356 aa).

This sequence belongs to the acetokinase family.

The protein localises to the cytoplasm. It catalyses the reaction butanoate + ATP = butanoyl phosphate + ADP. This chain is Probable butyrate kinase, found in Coprothermobacter proteolyticus (strain ATCC 35245 / DSM 5265 / OCM 4 / BT).